Consider the following 233-residue polypeptide: MTPHINAKIGDFYPQCLLCGDPLRVSYIAKKFLQDAKEITNVRNMLGFSGKYKGKGISLMGHGMGIASCTIYVTELIKTYQVKELLRIGTCGAISPKVGLKDIIMAMGASTDSKTNRVRFLNHDLSATPDFELSLRAYQTAKRLGIDLKVGNVFSSDFFYSFETHAFDLMAQYNHLAIEMEAAGLYATAMELSAKALCLCSVSDHLITKEALSPKERVESFDNMIILALEMMS.

His-4 contacts a purine D-ribonucleoside. Phosphate contacts are provided by residues Gly-20, Arg-24, Arg-43, and 87–90 (RIGT). A purine D-ribonucleoside contacts are provided by residues 179-181 (EME) and 203-204 (SD). Residue Asp-204 is the Proton donor of the active site.

Belongs to the PNP/UDP phosphorylase family. In terms of assembly, homohexamer; trimer of homodimers.

The enzyme catalyses a purine D-ribonucleoside + phosphate = a purine nucleobase + alpha-D-ribose 1-phosphate. It carries out the reaction a purine 2'-deoxy-D-ribonucleoside + phosphate = a purine nucleobase + 2-deoxy-alpha-D-ribose 1-phosphate. Functionally, catalyzes the reversible phosphorolytic breakdown of the N-glycosidic bond in the beta-(deoxy)ribonucleoside molecules, with the formation of the corresponding free purine bases and pentose-1-phosphate. The protein is Purine nucleoside phosphorylase DeoD-type of Helicobacter pylori (strain HPAG1).